A 959-amino-acid chain; its full sequence is Atromentin synthetase invA1 (959 aa).

An adenylation (A) domain region spans residues D59–V466. The region spanning T598–K676 is the Carrier domain. Residues T603–V673 form a thiolation and peptide carrier (T) domain region. An O-(pantetheine 4'-phosphoryl)serine modification is found at S635. The tract at residues P699–F946 is thioesterase (TE) domain.

It belongs to the ATP-dependent AMP-binding enzyme family.

The protein operates within secondary metabolite biosynthesis. An L-tyrosine:2-oxoglutarate aminotransferase (probably invD) and atromentin synthetase invA1 catalyze consecutive steps to turn over L-tyrosine into atromentin, which represents the generic precursor molecule for the entire terphenylquinone and pulvinic acid family of pigments, which are widely distributed secondary metabolites in homobasidiomycetes. The first step catalyzed by the aminotransferase converts L-tyrosine in to 4-hydroxyphenylpyruvate (4-HPP). Adenylation of two 4-HPP monomers by the invA1 adenylation (A) domain, covalent tethering of the monomers as a thioester and oxoester onto the invA1 thiolation (T) and thioesterase (TE) domains, respectively, and symmetric C-C-bond formation between two monomers catalyzed by the invA1 TE domain leads to atromentin. The protein is Atromentin synthetase invA1 (invA1) of Paxillus involutus (Naked brimcap).